The sequence spans 53 residues: Large ribosomal subunit protein bL32 (53 aa).

The disordered stretch occupies residues 1-27; the sequence is MAVQQNKKSRSRRDMRRSHDALTTAAV. Residues 7–16 are compositionally biased toward basic residues; that stretch reads KKSRSRRDMR.

The protein belongs to the bacterial ribosomal protein bL32 family.

The chain is Large ribosomal subunit protein bL32 from Glaesserella parasuis serovar 5 (strain SH0165) (Haemophilus parasuis).